Consider the following 283-residue polypeptide: Bifunctional protein FolD (283 aa).

NADP(+) is bound by residues 163–165 (GRS), S188, and I229.

Belongs to the tetrahydrofolate dehydrogenase/cyclohydrolase family. In terms of assembly, homodimer.

The enzyme catalyses (6R)-5,10-methylene-5,6,7,8-tetrahydrofolate + NADP(+) = (6R)-5,10-methenyltetrahydrofolate + NADPH. It carries out the reaction (6R)-5,10-methenyltetrahydrofolate + H2O = (6R)-10-formyltetrahydrofolate + H(+). It participates in one-carbon metabolism; tetrahydrofolate interconversion. Functionally, catalyzes the oxidation of 5,10-methylenetetrahydrofolate to 5,10-methenyltetrahydrofolate and then the hydrolysis of 5,10-methenyltetrahydrofolate to 10-formyltetrahydrofolate. This chain is Bifunctional protein FolD, found in Latilactobacillus sakei subsp. sakei (strain 23K) (Lactobacillus sakei subsp. sakei).